Reading from the N-terminus, the 568-residue chain is Proline--tRNA ligase (568 aa).

It belongs to the class-II aminoacyl-tRNA synthetase family. ProS type 1 subfamily. Homodimer.

The protein localises to the cytoplasm. The enzyme catalyses tRNA(Pro) + L-proline + ATP = L-prolyl-tRNA(Pro) + AMP + diphosphate. In terms of biological role, catalyzes the attachment of proline to tRNA(Pro) in a two-step reaction: proline is first activated by ATP to form Pro-AMP and then transferred to the acceptor end of tRNA(Pro). As ProRS can inadvertently accommodate and process non-cognate amino acids such as alanine and cysteine, to avoid such errors it has two additional distinct editing activities against alanine. One activity is designated as 'pretransfer' editing and involves the tRNA(Pro)-independent hydrolysis of activated Ala-AMP. The other activity is designated 'posttransfer' editing and involves deacylation of mischarged Ala-tRNA(Pro). The misacylated Cys-tRNA(Pro) is not edited by ProRS. The chain is Proline--tRNA ligase from Listeria innocua serovar 6a (strain ATCC BAA-680 / CLIP 11262).